Consider the following 585-residue polypeptide: Pre-mRNA-splicing factor sap145 (585 aa).

Residues 1 to 74 (MAEIQTAQNP…NNDNLYNDKK (74 aa)) are a coiled coil. Positions 1–84 (MAEIQTAQNP…SNGNFYDTNK (84 aa)) are disordered. The span at 12 to 22 (KELEKILERNN) shows a compositional bias: basic and acidic residues. Basic residues predominate over residues 23–41 (KQKNKKSRNQVRREKKKLL). Residues 51 to 62 (LAEKNSDDKDQL) are compositionally biased toward basic and acidic residues. At Ser145 the chain carries Phosphoserine. The tract at residues 400–460 (IHAGTGSPVS…SASEPRSQRE (61 aa)) is disordered. Residues 416 to 439 (LEEFEEEESSEEEESEDVEYPTEE) are compositionally biased toward acidic residues.

In terms of assembly, belongs to the 40S cdc5-associated complex (or cwf complex), a spliceosome sub-complex reminiscent of a late-stage spliceosome composed of the U2, U5 and U6 snRNAs and at least brr2, cdc5, cwf2/prp3, cwf3/syf1, cwf4/syf3, cwf5/ecm2, spp42/cwf6, cwf7/spf27, cwf8, cwf9, cwf10, cwf11, cwf12, prp45/cwf13, cwf14, cwf15, cwf16, cwf17, cwf18, cwf19, cwf20, cwf21, cwf22, cwf23, cwf24, cwf25, cwf26, cyp7/cwf27, cwf28, cwf29/ist3, lea1, msl1, prp5/cwf1, prp10/sap155, prp12/sap130, prp17, prp22, sap61, sap62, sap114, sap145, slu7, smb1, smd1, smd3, smf1, smg1 and syf2. Sap145 is part of the SF3b subcomplex of the Prp19-associated nineteen complex (NTC), composed of ini1, prp10, prp12/sap130, sap10/sap155, sap14, sap49 and sap145. Part of the U2 snRNP.

The protein resides in the nucleus. Its subcellular location is the cytoplasm. Its function is as follows. Involved in pre-mRNA splicing. May be involved in endoplasmic reticulum-associated protein degradation (ERAD) and required for growth at low and high temperatures. The chain is Pre-mRNA-splicing factor sap145 (sap145) from Schizosaccharomyces pombe (strain 972 / ATCC 24843) (Fission yeast).